We begin with the raw amino-acid sequence, 425 residues long: Tyrosine--tRNA ligase (425 aa).

Tyr37 provides a ligand contact to L-tyrosine. Residues 42–51 (PTADSLHLGH) carry the 'HIGH' region motif. L-tyrosine is bound by residues Tyr175 and Gln179. The 'KMSKS' region motif lies at 235–239 (KFGKT). Residue Lys238 participates in ATP binding. Positions 357–414 (ADLQQALVSAELVPSRGQARTMISSNAVTINGEKQADPEYTFSASDRLFDRYTLLRRG) constitute an S4 RNA-binding domain.

This sequence belongs to the class-I aminoacyl-tRNA synthetase family. TyrS type 1 subfamily. As to quaternary structure, homodimer.

Its subcellular location is the cytoplasm. It catalyses the reaction tRNA(Tyr) + L-tyrosine + ATP = L-tyrosyl-tRNA(Tyr) + AMP + diphosphate + H(+). Catalyzes the attachment of tyrosine to tRNA(Tyr) in a two-step reaction: tyrosine is first activated by ATP to form Tyr-AMP and then transferred to the acceptor end of tRNA(Tyr). The chain is Tyrosine--tRNA ligase from Pectobacterium carotovorum subsp. carotovorum (strain PC1).